The sequence spans 270 residues: Glutamate racemase (270 aa).

Substrate is bound by residues 7-8 (DS) and 39-40 (YG). Cys70 (proton donor/acceptor) is an active-site residue. 71-72 (NT) provides a ligand contact to substrate. The active-site Proton donor/acceptor is the Cys194. 195–196 (TH) is a binding site for substrate.

This sequence belongs to the aspartate/glutamate racemases family.

The catalysed reaction is L-glutamate = D-glutamate. It functions in the pathway cell wall biogenesis; peptidoglycan biosynthesis. Functionally, provides the (R)-glutamate required for cell wall biosynthesis. This is Glutamate racemase from Paracoccus denitrificans (strain Pd 1222).